A 464-amino-acid chain; its full sequence is GTPase Der (464 aa).

2 consecutive EngA-type G domains span residues 3–166 and 178–351; these read PVIA…PEVE and IRIA…DSAF. GTP-binding positions include 9-16, 56-60, 118-121, 184-191, 231-235, and 296-299; these read GRPNVGKS, DTGGL, NKTD, GRPNAGKS, DTAGV, and NKWD. In terms of domain architecture, KH-like spans 352–436; that stretch reads IKVSTNHLTK…PIRLEFKTGE (85 aa).

Belongs to the TRAFAC class TrmE-Era-EngA-EngB-Septin-like GTPase superfamily. EngA (Der) GTPase family. In terms of assembly, associates with the 50S ribosomal subunit.

Functionally, GTPase that plays an essential role in the late steps of ribosome biogenesis. The protein is GTPase Der of Thioalkalivibrio sulfidiphilus (strain HL-EbGR7).